A 161-amino-acid polypeptide reads, in one-letter code: MPSFDIVSEVNLVEVKNALDQSNKEITNRYDFKGSDARVELADKIMTAYADSDFQLDQVKDVLLGKLAKRDVDVRCLDYAKVEKVSGNKVKQAITVKVGVETDLAKKLVRLIKDSKLKVQASIQGDAVRVSGAKRDVLQETIAMVRKEITDFPLQFNNFRE.

It belongs to the YajQ family.

In terms of biological role, nucleotide-binding protein. This chain is Nucleotide-binding protein LHK_01423, found in Laribacter hongkongensis (strain HLHK9).